A 313-amino-acid chain; its full sequence is Olfactory receptor 4M2 (313 aa).

Topologically, residues 1–25 are extracellular; the sequence is METANYTKVTEFVLTGLSQTPEVQL. A glycan (N-linked (GlcNAc...) asparagine) is linked at Asn5. A helical membrane pass occupies residues 26–49; that stretch reads VLFVIFLSFYLFILPGNILIICTI. Topologically, residues 50–57 are cytoplasmic; sequence SLDPHLTS. A helical membrane pass occupies residues 58 to 79; that stretch reads PMYFLLANLAFLDIWYSSITAP. Topologically, residues 80-100 are extracellular; it reads EMLIDFFVERKIISFDGCIAQ. Cys97 and Cys189 are oxidised to a cystine. The helical transmembrane segment at 101 to 120 threads the bilayer; it reads LFFLHFAGASEMFLLTVMAF. Topologically, residues 121–139 are cytoplasmic; it reads DLYTAICRPLHYATIMNQR. A helical transmembrane segment spans residues 140-158; sequence LCCILVALSWRGGFIHSII. Over 159–195 the chain is Extracellular; that stretch reads QVALIVRLPFCGPNELDSYFCDITQVVRIACANTFPE. Residues 196-219 form a helical membrane-spanning segment; sequence ELVMICSSGLISVVCLIALLMSYA. Residues 220–237 are Cytoplasmic-facing; that stretch reads FLLALFKKLSGSGENTNR. A helical membrane pass occupies residues 238 to 260; it reads AMSTCYSHITIVVLMFGPSIYIY. At 261–271 the chain is on the extracellular side; it reads ARPFDSFSLDK. Residues 272–291 traverse the membrane as a helical segment; sequence VVSVFNTLIFPLRNPIIYTL. At 292–313 the chain is on the cytoplasmic side; it reads RNKEVKAAMRKLVTKYILCKEK.

The protein belongs to the G-protein coupled receptor 1 family.

The protein resides in the cell membrane. Its function is as follows. Odorant receptor. This is Olfactory receptor 4M2 (OR4M2) from Homo sapiens (Human).